We begin with the raw amino-acid sequence, 382 residues long: MQMIKKMVLSETFPGILLIFFTFLALLCKNSSLSVIYTDFFHANFTVGFDHFQISKSLDLWINDGLIAIFFLCIGLELKYEILRGQLKNIRAVSLPIFGALGGMITPALIFIAINYAHDFAMKGWAIPTATDIAFAVGILMLLGNKIPTSLKLFLLSLAIFDDLGAIVIIALFYTDQLSALAIIICLFCIFALLLLNYYHITHLSLYVLVGVVLWIAMLKSGVHATLAGVIISLFIPLDTKNKKPYLHEVLKDLNPWVVYFILPLFAFANAGIDIRDMHLGSVFSPVSLGIILGLFLGKQLGVFTFCFIAIKLKLAKLPENIKYGKFYGICILTGIGFTMSLFIDGLAYKNSDIFEYADKLAILVASFLSAIVGFIYLKIVK.

11 consecutive transmembrane segments (helical) span residues 7-27 (MVLS…LALL), 58-78 (LDLW…GLEL), 94-114 (SLPI…FIAI), 124-144 (GWAI…MLLG), 153-173 (LFLL…IALF), 178-198 (LSAL…LLNY), 199-219 (YHIT…IAML), 255-275 (NPWV…GIDI), 291-311 (IILG…FIAI), 327-347 (FYGI…IDGL), and 361-381 (LAIL…LKIV).

The protein belongs to the NhaA Na(+)/H(+) (TC 2.A.33) antiporter family.

It localises to the cell inner membrane. It catalyses the reaction Na(+)(in) + 2 H(+)(out) = Na(+)(out) + 2 H(+)(in). Its function is as follows. Na(+)/H(+) antiporter that extrudes sodium in exchange for external protons. The protein is Na(+)/H(+) antiporter NhaA 2 of Campylobacter jejuni (strain RM1221).